We begin with the raw amino-acid sequence, 286 residues long: NAD kinase (286 aa).

D66 acts as the Proton acceptor in catalysis. Residues 66 to 67, 137 to 138, R148, R165, D167, and 178 to 183 contribute to the NAD(+) site; these read DG, ND, and TAYSMS.

It belongs to the NAD kinase family. A divalent metal cation serves as cofactor.

The protein localises to the cytoplasm. The enzyme catalyses NAD(+) + ATP = ADP + NADP(+) + H(+). Involved in the regulation of the intracellular balance of NAD and NADP, and is a key enzyme in the biosynthesis of NADP. Catalyzes specifically the phosphorylation on 2'-hydroxyl of the adenosine moiety of NAD to yield NADP. The protein is NAD kinase of Chlorobium chlorochromatii (strain CaD3).